Consider the following 66-residue polypeptide: MAKSKDVRVTITLECISCDRNNSDKRFPGVSRYTTRKNQRNTPTRLELKKFCPYCSEHTIHRELKK.

Belongs to the bacterial ribosomal protein bL33 family.

It localises to the plastid. The protein localises to the chloroplast. The sequence is that of Large ribosomal subunit protein bL33c from Angiopteris evecta (Mule's foot fern).